A 1040-amino-acid chain; its full sequence is Putative protein tag-76 (1040 aa).

The span at 1 to 15 (MSRRNATSFVDNNTL) shows a compositional bias: polar residues. Disordered regions lie at residues 1–61 (MSRR…GSVS) and 322–367 (RTSK…PGAN). A compositionally biased stretch (low complexity) spans 16 to 32 (TSSGISGSGSMSPPITS). The span at 33–50 (RPASGQASPLTSNGSLSP) shows a compositional bias: polar residues. Gly residues predominate over residues 333–356 (GPGGPGGPGGYRGGRGGGRGGSYG). Positions 379-486 (FTMDTLSRDT…LPMEHCLIDS (108 aa)) constitute a PAZ domain. The Piwi domain maps to 660–966 (CIIVVLQSKN…VATRARCHVK (307 aa)).

This Caenorhabditis elegans protein is Putative protein tag-76 (tag-76).